Reading from the N-terminus, the 505-residue chain is Histidine ammonia-lyase (505 aa).

The segment at residues 144-146 (ASG) is a cross-link (5-imidazolinone (Ala-Gly)). Ser145 bears the 2,3-didehydroalanine (Ser) mark.

This sequence belongs to the PAL/histidase family. Contains an active site 4-methylidene-imidazol-5-one (MIO), which is formed autocatalytically by cyclization and dehydration of residues Ala-Ser-Gly.

The protein localises to the cytoplasm. It catalyses the reaction L-histidine = trans-urocanate + NH4(+). Its pathway is amino-acid degradation; L-histidine degradation into L-glutamate; N-formimidoyl-L-glutamate from L-histidine: step 1/3. This chain is Histidine ammonia-lyase, found in Legionella pneumophila (strain Corby).